The sequence spans 288 residues: Proteasome assembly chaperone 1 (288 aa).

The residue at position 2 (Ala-2) is an N-acetylalanine. Residues 13–35 (PCRAGTEDEEEEEEGRRETPEDR) form a disordered region. Position 18 is a phosphothreonine (Thr-18). A compositionally biased stretch (basic and acidic residues) spans 26-35 (EGRRETPEDR). Thr-54 carries the phosphothreonine modification. Ser-180 carries the post-translational modification Phosphoserine. Lys-264 is modified (N6-acetyllysine).

This sequence belongs to the PSMG1 family. As to quaternary structure, forms a heterodimer with PSMG2. The PSMG1-PSMG2 heterodimer interacts directly with the PSMA5 and PSMA7 proteasome alpha subunits. In terms of processing, degraded by the proteasome upon completion of 20S proteasome maturation. As to expression, in the adult, detected in brain, colon, leukocytes, breast and testis. Widely expressed in the fetus. Also expressed in a variety of proliferating cell lines.

The protein resides in the cytoplasm. It localises to the endoplasmic reticulum. Its function is as follows. Chaperone protein which promotes assembly of the 20S proteasome as part of a heterodimer with PSMG2. The PSMG1-PSMG2 heterodimer binds to the PSMA5 and PSMA7 proteasome subunits, promotes assembly of the proteasome alpha subunits into the heteroheptameric alpha ring and prevents alpha ring dimerization. This is Proteasome assembly chaperone 1 from Homo sapiens (Human).